Consider the following 258-residue polypeptide: UPF0246 protein YaaA (258 aa).

This sequence belongs to the UPF0246 family.

This chain is UPF0246 protein YaaA, found in Escherichia coli O157:H7 (strain EC4115 / EHEC).